The primary structure comprises 461 residues: Protein ultraspiracle homolog (461 aa).

The modulating stretch occupies residues Met-1–Leu-112. Residues Pro-26–Thr-51 are disordered. Over residues Ala-27–Ser-40 the composition is skewed to low complexity. Residues Asn-41–Thr-51 show a composition bias toward polar residues. 2 NR C4-type zinc fingers span residues Cys-113 to Cys-133 and Cys-149 to Cys-173. The nuclear receptor DNA-binding region spans Cys-113–Glu-185. The segment at Glu-185–Arg-192 is hinge. Positions Val-203 to His-452 constitute an NR LBD domain.

Belongs to the nuclear hormone receptor family. NR2 subfamily. In terms of assembly, heterodimer of USP and ECR. Only the heterodimer is capable of high-affinity binding to ecdysone.

The protein resides in the nucleus. Receptor for ecdysone. May be an important modulator of insect metamorphosis. This chain is Protein ultraspiracle homolog (USP), found in Manduca sexta (Tobacco hawkmoth).